We begin with the raw amino-acid sequence, 63 residues long: Large ribosomal subunit protein uL30 (63 aa).

Belongs to the universal ribosomal protein uL30 family. In terms of assembly, part of the 50S ribosomal subunit.

The sequence is that of Large ribosomal subunit protein uL30 from Rickettsia typhi (strain ATCC VR-144 / Wilmington).